Here is a 219-residue protein sequence, read N- to C-terminus: Vacuolar protein sorting-associated protein 32 homolog 2 (219 aa).

Coiled coils occupy residues 10–41 (KQEA…KKAG) and 117–176 (TNID…QLLQ). The segment at 168–219 (EELESQLLQPATTAPPLPSVPVPAGRQPARPVPQKRTAEEEELAALQAEMAL) is disordered.

It belongs to the SNF7 family. As to quaternary structure, component of the endosomal sorting required for transport complex III (ESCRT-III), composed at least of VPS2, VPS20, VPS24 and VPS32. Interacts with SKD1. Interacts with BRO1/ALIX.

It is found in the endosome. In terms of biological role, component of the ESCRT-III complex, which is required for multivesicular bodies (MVBs) formation and sorting of endosomal cargo proteins into MVBs. The ESCRT-III complex is probably involved in the concentration of MVB cargo. This Arabidopsis thaliana (Mouse-ear cress) protein is Vacuolar protein sorting-associated protein 32 homolog 2 (VPS32.2).